The following is a 316-amino-acid chain: MLEQPYLDLAKKVLDEGHFKPDRTHTGTYSIFGHQMRFDLSKGFPLLTTKKVPFGLIKSELLWFLHGDTNIRFLLQHRNHIWDEWAFEKWVKSDEYHGPDMTDFGHRSQKDPEFAAVYHEEMAKFDDRVLHDDAFAAKYGDLGLVYGSQWRAWHTSKGDTIDQLGDVIEQIKTHPYSRRLIVSAWNPEDVPTMALPPCHTLYQFYVNDGKLSLQLYQRSADIFLGVPFNIASYALLTHLVAHECGLEVGEFIHTFGDAHLYVNHLDQIKEQLSRTPRPAPTLQLNPDKHDIFDFDMKDIKLLNYDPYPAIKAPVAV.

DUMP-binding positions include Arg23 and 178 to 179 (RR). Cys198 acts as the Nucleophile in catalysis. DUMP is bound by residues 218-221 (RSAD), Asn229, and 259-261 (HLY). (6R)-5,10-methylene-5,6,7,8-tetrahydrofolate is bound at residue Asp221. Ala315 provides a ligand contact to (6R)-5,10-methylene-5,6,7,8-tetrahydrofolate.

This sequence belongs to the thymidylate synthase family. Bacterial-type ThyA subfamily. As to quaternary structure, homodimer.

It localises to the cytoplasm. It carries out the reaction dUMP + (6R)-5,10-methylene-5,6,7,8-tetrahydrofolate = 7,8-dihydrofolate + dTMP. It participates in pyrimidine metabolism; dTTP biosynthesis. Catalyzes the reductive methylation of 2'-deoxyuridine-5'-monophosphate (dUMP) to 2'-deoxythymidine-5'-monophosphate (dTMP) while utilizing 5,10-methylenetetrahydrofolate (mTHF) as the methyl donor and reductant in the reaction, yielding dihydrofolate (DHF) as a by-product. This enzymatic reaction provides an intracellular de novo source of dTMP, an essential precursor for DNA biosynthesis. The chain is Thymidylate synthase from Lacticaseibacillus casei (Lactobacillus casei).